The primary structure comprises 434 residues: Zinc finger protein kipf (434 aa).

A ZAD domain is found at 7–88 (NVCRTCMDET…EQSYQHFFRV (82 aa)). Residues Cys-9, Cys-12, Cys-61, and Cys-64 each coordinate Zn(2+). Residues 117-173 (QLKSDRQQDTQQMTKTQKPDDDLSQKQTLQAKLQEGNIDGPPESFTLHPRKRTCRTE) form a disordered region. A C2H2-type 1; degenerate zinc finger spans residues 197–219 (YNCPHCSKRFCSQTQLRTHITDL). 3 consecutive C2H2-type zinc fingers follow at residues 221-243 (NRCPYCPRTYMQKSNLKRHLRNH), 249-271 (HKCFHCSKAFMRKDHLKRHLRTH), and 277-299 (LSCSQCSAVFIEHVQLEIHRREH). The segment at 295-328 (HRREHKQRPGSSKSESTKDPDSDDSDQAQDLKPK) is disordered. A phosphoserine mark is found at Ser-316 and Ser-319. 3 C2H2-type zinc fingers span residues 348–370 (PICDICQKKFSSVYALKRHMLTH), 377–399 (KKCTYCSEEFKTEKHLKRHERGH), and 404–427 (FRCEFCSLVFVDVNYLRKHKKRIH).

As to quaternary structure, homodimer; mediated by the ZAD domain. Interacts (via C2H2 type zinc finger 4) with rhi/rhino (via Chromo domain). Dimerization is required for association with DNA and interaction with rhi/rhino. As to expression, primarily expressed in ovaries and absent from testes. In ovaries very low levels in germline stem cells and cystoblasts but abundant in developing cysts and polyploid nurse cells.

It is found in the nucleus. The protein localises to the chromosome. Functionally, DNA-binding zinc finger protein that recruits chromo domain protein rhino/rhi to specific chromatin regions enriched in H3K9me2/3 histone methylation, mediating piRNA (piwi-interacting RNA) biogenesis. May bind to GC rich DNA sequences including a 5'-GRGGN-3' sequence motif. Nucleates rhi/rhino accumulation and stabilizes its expansion. Involved in piRNA transposon repression, particularly in the female ovary during oogenesis. This Drosophila melanogaster (Fruit fly) protein is Zinc finger protein kipf.